Here is a 423-residue protein sequence, read N- to C-terminus: COP9 signalosome complex subunit 3 (423 aa).

The residue at position 2 (Ala2) is an N-acetylalanine. Residues 197 to 365 (NFERALYFYE…GMVSFHDNPE (169 aa)) enclose the PCI domain. The tract at residues 402-423 (QFVQKSMGSQEDDSGNKPSSYS) is disordered. Residues Ser407, Ser410, and Ser423 each carry the phosphoserine modification.

The protein belongs to the CSN3 family. As to quaternary structure, component of the CSN complex, composed of COPS1/GPS1, COPS2, COPS3, COPS4, COPS5, COPS6, COPS7 (COPS7A or COPS7B), COPS8 and COPS9 isoform 1. In the complex, it probably interacts directly with COPS1, COPS4, COPS8 and COPS9 isoform 1. Interacts with CK2 and PKD. Interacts with the translation initiation factor EIF3S6 and IKBKG. Interacts with ERCC6. Widely expressed. Expressed at high level in heart and skeletal muscle.

Its subcellular location is the cytoplasm. It localises to the nucleus. Its function is as follows. Component of the COP9 signalosome complex (CSN), a complex involved in various cellular and developmental processes. The CSN complex is an essential regulator of the ubiquitin (Ubl) conjugation pathway by mediating the deneddylation of the cullin subunits of SCF-type E3 ligase complexes, leading to decrease the Ubl ligase activity of SCF-type complexes such as SCF, CSA or DDB2. The complex is also involved in phosphorylation of p53/TP53, c-jun/JUN, IkappaBalpha/NFKBIA, ITPK1 and IRF8/ICSBP, possibly via its association with CK2 and PKD kinases. CSN-dependent phosphorylation of TP53 and JUN promotes and protects degradation by the Ubl system, respectively. This chain is COP9 signalosome complex subunit 3 (COPS3), found in Homo sapiens (Human).